An 86-amino-acid chain; its full sequence is Neuropeptide precursor capa-1 (86 aa).

A signal peptide spans 1 to 19 (MLLWIVATLLIFSLPVSTA).

In terms of tissue distribution, expressed in two pairs of neurons in the anterior part of the nervous system (at protein level).

Functionally, encodes at least three neuropeptides: two of the periviscerokinin family (APHPSSALLVPYPRV-amide and LYMARV-amide) and one pyrokinin (AFFYTPRI-amide). In terms of biological role, putative ligand for neuromedin U receptor homolog nmur-2. The chain is Neuropeptide precursor capa-1 from Caenorhabditis elegans.